Here is a 502-residue protein sequence, read N- to C-terminus: MLDLLQAGGSVLGQAMEQVTGGNLASMLLIACAFTLSLVYLFRLAVGHLAPPLPTGAKSPPYIVSPIPFLGHAIAFGKSPIEFLEDAYEKYGPVFSFTMVGKTFTYLLGSEAAALLFNSKNEDLNAEEVYSRLTTPVFGKGVAYDVPNTVFLEQKKMLKSGLNIAHFRQHVSIIEKETKEYFKSWGESGEKNLFEALSELIILTASHCLHGKEIRSQLNEKVAQLYADLDGGFSHAAWLLPGWLPLPSFRRRDRAHREIKNIFYKAIQKRRESGEKIDDILQTLLESTYKDGRPLTDDEVAGMLIGLLLAGQHTSSTTSAWMGFFLARDKTLQEKCFLEQKTVCGENLPPLTYDQLKDLNLLDRCIKETLRLRPPIMTMMRLAKTPLTVAGYTIPPGHQVCVSPTVNQRLKDSWVERLDFNPDRYLEDSPASGEKFAYVPFGAGRHRCIGENFAYVQIKTIWSTMLRLYEFDLIDGYFPTVNYTTMIHTPEKPIIRYKRRSK.

A helical membrane pass occupies residues 22 to 42 (GNLASMLLIACAFTLSLVYLF). Position 448 (cysteine 448) interacts with heme.

Belongs to the cytochrome P450 family. It depends on heme as a cofactor. Ubiquitinated by MARCHF6, leading to proteasomal degradation.

It is found in the endoplasmic reticulum membrane. The protein localises to the microsome membrane. The catalysed reaction is a 14alpha-methyl steroid + 3 reduced [NADPH--hemoprotein reductase] + 3 O2 = a Delta(14) steroid + formate + 3 oxidized [NADPH--hemoprotein reductase] + 4 H2O + 4 H(+). It carries out the reaction lanosterol + 3 reduced [NADPH--hemoprotein reductase] + 3 O2 = 4,4-dimethyl-5alpha-cholesta-8,14,24-trien-3beta-ol + formate + 3 oxidized [NADPH--hemoprotein reductase] + 4 H2O + 4 H(+). It catalyses the reaction 24,25-dihydrolanosterol + 3 reduced [NADPH--hemoprotein reductase] + 3 O2 = 4,4-dimethyl-8,14-cholestadien-3beta-ol + formate + 3 oxidized [NADPH--hemoprotein reductase] + 4 H2O + 4 H(+). The enzyme catalyses a 14alpha-methyl steroid + reduced [NADPH--hemoprotein reductase] + O2 = a 14alpha-hydroxymethyl steroid + oxidized [NADPH--hemoprotein reductase] + H2O + H(+). The catalysed reaction is a 14alpha-hydroxymethyl steroid + reduced [NADPH--hemoprotein reductase] + O2 = a 14alpha-formyl steroid + oxidized [NADPH--hemoprotein reductase] + 2 H2O + H(+). It carries out the reaction a 14alpha-formyl steroid + reduced [NADPH--hemoprotein reductase] + O2 = a Delta(14) steroid + formate + oxidized [NADPH--hemoprotein reductase] + H2O + 2 H(+). It catalyses the reaction lanosterol + reduced [NADPH--hemoprotein reductase] + O2 = 32-hydroxylanosterol + oxidized [NADPH--hemoprotein reductase] + H2O + H(+). The enzyme catalyses 32-hydroxylanosterol + reduced [NADPH--hemoprotein reductase] + O2 = 32-oxolanosterol + oxidized [NADPH--hemoprotein reductase] + 2 H2O + H(+). The catalysed reaction is 32-oxolanosterol + reduced [NADPH--hemoprotein reductase] + O2 = 4,4-dimethyl-5alpha-cholesta-8,14,24-trien-3beta-ol + formate + oxidized [NADPH--hemoprotein reductase] + H2O + 2 H(+). It carries out the reaction 24,25-dihydrolanosterol + reduced [NADPH--hemoprotein reductase] + O2 = 32-hydroxy-24,25-dihydrolanosterol + oxidized [NADPH--hemoprotein reductase] + H2O + H(+). It catalyses the reaction 32-hydroxy-24,25-dihydrolanosterol + reduced [NADPH--hemoprotein reductase] + O2 = 32-oxo-24,25-dihydrolanosterol + oxidized [NADPH--hemoprotein reductase] + 2 H2O + H(+). The enzyme catalyses 32-oxo-24,25-dihydrolanosterol + reduced [NADPH--hemoprotein reductase] + O2 = 4,4-dimethyl-8,14-cholestadien-3beta-ol + formate + oxidized [NADPH--hemoprotein reductase] + H2O + 2 H(+). Its pathway is steroid biosynthesis; zymosterol biosynthesis; zymosterol from lanosterol: step 1/6. Its activity is regulated as follows. Inhibited by azalanstat. Inhibited by azole antifungal agents ketoconazole, itraconazole and fluconazole. Its function is as follows. Sterol 14alpha-demethylase that plays a critical role in the cholesterol biosynthesis pathway, being cholesterol the major sterol component in mammalian membranes as well as a precursor for bile acid and steroid hormone synthesis. Cytochrome P450 monooxygenase that catalyzes the three-step oxidative removal of the 14alpha-methyl group (C-32) of sterols such as lanosterol (lanosta-8,24-dien-3beta-ol) and 24,25-dihydrolanosterol (DHL) in the form of formate, and converts the sterols to 4,4-dimethyl-5alpha-cholesta-8,14,24-trien-3beta-ol and 4,4-dimethyl-8,14-cholestadien-3beta-ol, respectively, which are intermediates of cholesterol biosynthesis. Can also demethylate substrates not intrinsic to mammals, such as eburicol (24-methylene-24,25-dihydrolanosterol), but at a lower rate than DHL. This chain is Lanosterol 14-alpha demethylase, found in Bos taurus (Bovine).